The chain runs to 549 residues: Cation/acetate symporter ActP (549 aa).

Transmembrane regions (helical) follow at residues 33–53 (WQAI…TYWA), 77–97 (LAIA…ALVF), 103–123 (GLIY…LIAE), 148–168 (ILSA…QMVG), 183–203 (IAVV…GMLA), 206–226 (WVQI…AFMV), 262–282 (ISAL…PHIL), 303–323 (GFMG…IMLV), 355–375 (LFLG…VAGL), 404–424 (VSKI…ILFE), 428–448 (IAFM…PIIL), 464–484 (GGWL…TIWV), and 493–513 (IFPY…GIWF).

Belongs to the sodium:solute symporter (SSF) (TC 2.A.21) family.

It is found in the cell inner membrane. In terms of biological role, transports acetate. The sequence is that of Cation/acetate symporter ActP from Salmonella newport (strain SL254).